Consider the following 614-residue polypeptide: RNA polymerase sigma factor RpoD (614 aa).

The tract at residues 178 to 222 (THIGSDLSQSERDKDDSKDDSKDDDEDEEEEGPKGPDPEESKERF) is disordered. The segment covering 186 to 198 (QSERDKDDSKDDS) has biased composition (basic and acidic residues). Acidic residues predominate over residues 199–208 (KDDDEDEEEE). Positions 209 to 222 (GPKGPDPEESKERF) are enriched in basic and acidic residues. The tract at residues 380–450 (MVEANLRLVI…TRSIADQART (71 aa)) is sigma-70 factor domain-2. Residues 404 to 407 (DLIQ) carry the Interaction with polymerase core subunit RpoC motif. The tract at residues 459–535 (ETINKLNRIS…DTTLELPLDS (77 aa)) is sigma-70 factor domain-3. Positions 548 to 601 (VLAGLTAREAKVLRMRFGIDMNTDHTLEEVGKQFDVTRERIRQIEAKALRKLRH) are sigma-70 factor domain-4. Residues 574–593 (LEEVGKQFDVTRERIRQIEA) constitute a DNA-binding region (H-T-H motif).

Belongs to the sigma-70 factor family. RpoD/SigA subfamily. As to quaternary structure, interacts transiently with the RNA polymerase catalytic core.

The protein resides in the cytoplasm. Sigma factors are initiation factors that promote the attachment of RNA polymerase to specific initiation sites and are then released. This sigma factor is the primary sigma factor during exponential growth. This chain is RNA polymerase sigma factor RpoD, found in Shewanella violacea (strain JCM 10179 / CIP 106290 / LMG 19151 / DSS12).